Here is a 344-residue protein sequence, read N- to C-terminus: L-rhamnose-proton symporter (344 aa).

10 consecutive transmembrane segments (helical) span residues 4–24, 38–58, 68–88, 101–121, 137–157, 175–195, 214–234, 259–279, 290–310, and 323–343; these read AITM…CFYA, WSVG…ALLL, FSLS…IGNI, MGIG…TPII, TLLG…AGQL, LVLA…MNAA, LPSY…FCFI, VLLS…YAWG, ISWM…GLVL, and VLSL…IGMA.

Belongs to the L-rhamnose transporter (TC 2.A.7.6) family.

It localises to the cell inner membrane. The catalysed reaction is L-rhamnopyranose(in) + H(+)(in) = L-rhamnopyranose(out) + H(+)(out). Its function is as follows. Uptake of L-rhamnose across the cytoplasmic membrane with the concomitant transport of protons into the cell (symport system). This is L-rhamnose-proton symporter from Shigella flexneri.